A 269-amino-acid chain; its full sequence is MDTILNRILTHKRVEVERQRIKIPDAQIRARAEAAPPPRDFAAALRAHRPIALIAEVKKASPSKGVLIENFDPLALAHTYASNGASAISVLTDVRFFQGSLKHLEGIRAMVDRGAVPPLPLLRKDFIIDPYQVAEARAYGADALLLIVAALDDETLAALLALTHSFGMQALVEVHNEDELRRALDAGASIIGVNNRDLHSFTTTLETTRRLAALLPSSNRPLLVSESGIFTAEHVALVRSWGADAILVGEALVTAPDISSKVRELGGGS.

It belongs to the TrpC family.

It carries out the reaction 1-(2-carboxyphenylamino)-1-deoxy-D-ribulose 5-phosphate + H(+) = (1S,2R)-1-C-(indol-3-yl)glycerol 3-phosphate + CO2 + H2O. It participates in amino-acid biosynthesis; L-tryptophan biosynthesis; L-tryptophan from chorismate: step 4/5. In Roseiflexus sp. (strain RS-1), this protein is Indole-3-glycerol phosphate synthase.